Consider the following 80-residue polypeptide: Beta-toxin KAaH2 (80 aa).

The first 22 residues, 1–22, serve as a signal peptide directing secretion; the sequence is MMKLMLFSIIVILFSLIGSIHG. In terms of domain architecture, LCN-type CS-alpha/beta spans 25–80; sequence VPGNYPLDSSDDTYLCAPLGENPSCIQICRKHGVKYGYCYAFQCWCEYLEDKNVKI. Cystine bridges form between Cys40–Cys63, Cys49–Cys68, and Cys53–Cys70.

It belongs to the long (3 C-C) scorpion toxin superfamily. Sodium/Potassium channel inhibitor family. In terms of tissue distribution, expressed by the venom gland.

It localises to the secreted. Its function is as follows. Weakly inhibits the vertebrate potassium channel Kv1.1/KCNA1. The polypeptide is Beta-toxin KAaH2 (Androctonus australis (Sahara scorpion)).